A 236-amino-acid polypeptide reads, in one-letter code: ATP synthase subunit a (236 aa).

The next 5 membrane-spanning stretches (helical) occupy residues 18-38 (STVMMLLVAAIIVFLIAFIST), 79-99 (GITLIMFIAVSNLLGLPFSIV), 112-132 (DPTVTMTLATMILVLSHFYGV), 174-194 (IYAGEILLGLLAGLASSGAVG), and 205-227 (WQGFSIFIGFIQAFIFTMLTMVY).

Belongs to the ATPase A chain family. In terms of assembly, F-type ATPases have 2 components, CF(1) - the catalytic core - and CF(0) - the membrane proton channel. CF(1) has five subunits: alpha(3), beta(3), gamma(1), delta(1), epsilon(1). CF(0) has three main subunits: a(1), b(2) and c(9-12). The alpha and beta chains form an alternating ring which encloses part of the gamma chain. CF(1) is attached to CF(0) by a central stalk formed by the gamma and epsilon chains, while a peripheral stalk is formed by the delta and b chains.

The protein localises to the cell membrane. Functionally, key component of the proton channel; it plays a direct role in the translocation of protons across the membrane. The chain is ATP synthase subunit a from Lysinibacillus sphaericus (strain C3-41).